Here is a 557-residue protein sequence, read N- to C-terminus: NAC domain-containing protein 17 (557 aa).

The 151-residue stretch at 16 to 166 (SAPGFRFHPT…YYALYKLFKK (151 aa)) folds into the NAC domain. A DNA-binding region spans residues 115-172 (VGLKKTLVFYRGRAPSGERTDWVMHEYTMDEDELGRCKNPQEYYALYKLFKKSGAGPK). A helical membrane pass occupies residues 526–546 (FLLLSIVGALCAIFWVLVATV).

In terms of tissue distribution, expressed in roots, rosette leaves, cauline leaves, shoot apex, stems and flowers.

It localises to the endoplasmic reticulum membrane. It is found in the nucleus. Functionally, transcriptional activator activated by proteolytic cleavage through regulated intramembrane proteolysis (RIP). Transcriptional activator that acts as a positive regulator of AOX1A during mitochondrial dysfunction. Binds directly to AOX1A promoter. Mediates mitochondrial retrograde signaling. The protein is NAC domain-containing protein 17 of Arabidopsis thaliana (Mouse-ear cress).